A 348-amino-acid polypeptide reads, in one-letter code: Dihydroorotase (348 aa).

Zn(2+) contacts are provided by His-14 and His-16. Residues 16–18 (HLR) and Asn-42 contribute to the substrate site. Positions 100, 137, and 175 each coordinate Zn(2+). At Lys-100 the chain carries N6-carboxylysine. His-137 is a binding site for substrate. Leu-220 lines the substrate pocket. Zn(2+) is bound at residue Asp-248. Asp-248 is an active-site residue. Positions 252 and 264 each coordinate substrate.

It belongs to the metallo-dependent hydrolases superfamily. DHOase family. Class II DHOase subfamily. In terms of assembly, homodimer. It depends on Zn(2+) as a cofactor.

It carries out the reaction (S)-dihydroorotate + H2O = N-carbamoyl-L-aspartate + H(+). It participates in pyrimidine metabolism; UMP biosynthesis via de novo pathway; (S)-dihydroorotate from bicarbonate: step 3/3. In terms of biological role, catalyzes the reversible cyclization of carbamoyl aspartate to dihydroorotate. The protein is Dihydroorotase of Pseudomonas entomophila (strain L48).